Consider the following 236-residue polypeptide: 7-cyano-7-deazaguanine synthase (236 aa).

7 to 17 contacts ATP; that stretch reads CSGGLDSVSLA. Cysteine 185, cysteine 193, cysteine 196, and cysteine 199 together coordinate Zn(2+).

Belongs to the QueC family. Requires Zn(2+) as cofactor.

It carries out the reaction 7-carboxy-7-deazaguanine + NH4(+) + ATP = 7-cyano-7-deazaguanine + ADP + phosphate + H2O + H(+). Its pathway is purine metabolism; 7-cyano-7-deazaguanine biosynthesis. Catalyzes the ATP-dependent conversion of 7-carboxy-7-deazaguanine (CDG) to 7-cyano-7-deazaguanine (preQ(0)). In Rhizobium etli (strain ATCC 51251 / DSM 11541 / JCM 21823 / NBRC 15573 / CFN 42), this protein is 7-cyano-7-deazaguanine synthase.